Reading from the N-terminus, the 353-residue chain is UPF0283 membrane protein KPN78578_12740 (353 aa).

Helical transmembrane passes span Met70–Thr90, Trp99–Leu119, and Glu213–Trp233.

Belongs to the UPF0283 family.

It is found in the cell inner membrane. The protein is UPF0283 membrane protein KPN78578_12740 of Klebsiella pneumoniae subsp. pneumoniae (strain ATCC 700721 / MGH 78578).